The sequence spans 123 residues: Large ribosomal subunit protein bL19 (123 aa).

This sequence belongs to the bacterial ribosomal protein bL19 family.

This protein is located at the 30S-50S ribosomal subunit interface and may play a role in the structure and function of the aminoacyl-tRNA binding site. This is Large ribosomal subunit protein bL19 from Ruegeria sp. (strain TM1040) (Silicibacter sp.).